The chain runs to 416 residues: Casein kinase I isoform epsilon (416 aa).

Positions 9–277 (YRLGRKIGSG…YLRQLFRNLF (269 aa)) constitute a Protein kinase domain. ATP contacts are provided by residues 15 to 23 (IGSGSFGDI) and Lys38. The active-site Proton acceptor is Asp128. The segment covering 301-318 (PEDMDRERREHEREERMG) has biased composition (basic and acidic residues). Residues 301–416 (PEDMDRERRE…TSVPFDHLGK (116 aa)) are disordered. The segment covering 324 to 338 (ATRALPPGPPAGATG) has biased composition (low complexity). Polar residues-rich tracts occupy residues 350-365 (STPTSRIQQSGNTSPR) and 400-409 (SRISASQTSV).

Belongs to the protein kinase superfamily. CK1 Ser/Thr protein kinase family. Casein kinase I subfamily. In terms of assembly, monomer. Component of the circadian core oscillator, which includes the CRY proteins, CLOCK, or NPAS2, BMAL1 or BMAL2, CSNK1E, and the PER proteins.

It is found in the cytoplasm. It carries out the reaction L-seryl-[protein] + ATP = O-phospho-L-seryl-[protein] + ADP + H(+). It catalyses the reaction L-threonyl-[protein] + ATP = O-phospho-L-threonyl-[protein] + ADP + H(+). In terms of biological role, casein kinases are operationally defined by their preferential utilization of acidic proteins such as caseins as substrates. Can phosphorylate a large number of proteins. Participates in Wnt signaling. Phosphorylates DVL1. Central component of the circadian clock. May act as a negative regulator of circadian rhythmicity by phosphorylating PER1 and PER2. Retains PER1 in the cytoplasm. This chain is Casein kinase I isoform epsilon (CSNK1E), found in Gallus gallus (Chicken).